Reading from the N-terminus, the 116-residue chain is Large ribosomal subunit protein uL24 (116 aa).

It belongs to the universal ribosomal protein uL24 family. As to quaternary structure, part of the 50S ribosomal subunit.

Functionally, one of two assembly initiator proteins, it binds directly to the 5'-end of the 23S rRNA, where it nucleates assembly of the 50S subunit. Located at the polypeptide exit tunnel on the outside of the subunit. This is Large ribosomal subunit protein uL24 from Methanothrix thermoacetophila (strain DSM 6194 / JCM 14653 / NBRC 101360 / PT) (Methanosaeta thermophila).